The following is a 444-amino-acid chain: Argininosuccinate synthase (444 aa).

Residues 18 to 26 and Ala44 contribute to the ATP site; that span reads AFSGGLDTS. Tyr100 contacts L-citrulline. ATP-binding residues include Gly130 and Thr132. Residues Thr132, Asn136, and Asp137 each contribute to the L-aspartate site. Asn136 provides a ligand contact to L-citrulline. Asp137 is a binding site for ATP. L-citrulline-binding residues include Arg140 and Ser193. Asp195 lines the ATP pocket. L-citrulline contacts are provided by Thr202, Glu204, and Glu281.

The protein belongs to the argininosuccinate synthase family. Type 2 subfamily. In terms of assembly, homotetramer.

The protein localises to the cytoplasm. The catalysed reaction is L-citrulline + L-aspartate + ATP = 2-(N(omega)-L-arginino)succinate + AMP + diphosphate + H(+). Its pathway is amino-acid biosynthesis; L-arginine biosynthesis; L-arginine from L-ornithine and carbamoyl phosphate: step 2/3. This Histophilus somni (strain 2336) (Haemophilus somnus) protein is Argininosuccinate synthase.